Consider the following 476-residue polypeptide: Aspartyl/glutamyl-tRNA(Asn/Gln) amidotransferase subunit B (476 aa).

Belongs to the GatB/GatE family. GatB subfamily. As to quaternary structure, heterotrimer of A, B and C subunits.

The enzyme catalyses L-glutamyl-tRNA(Gln) + L-glutamine + ATP + H2O = L-glutaminyl-tRNA(Gln) + L-glutamate + ADP + phosphate + H(+). It carries out the reaction L-aspartyl-tRNA(Asn) + L-glutamine + ATP + H2O = L-asparaginyl-tRNA(Asn) + L-glutamate + ADP + phosphate + 2 H(+). In terms of biological role, allows the formation of correctly charged Asn-tRNA(Asn) or Gln-tRNA(Gln) through the transamidation of misacylated Asp-tRNA(Asn) or Glu-tRNA(Gln) in organisms which lack either or both of asparaginyl-tRNA or glutaminyl-tRNA synthetases. The reaction takes place in the presence of glutamine and ATP through an activated phospho-Asp-tRNA(Asn) or phospho-Glu-tRNA(Gln). The polypeptide is Aspartyl/glutamyl-tRNA(Asn/Gln) amidotransferase subunit B (Albidiferax ferrireducens (strain ATCC BAA-621 / DSM 15236 / T118) (Rhodoferax ferrireducens)).